Here is a 343-residue protein sequence, read N- to C-terminus: MTALITQEIGSFRKPDYLAKEFHKIERTPKFTELAERATRETLEVFERSGLDNIGIGGEMFRWEMYEHPAERIKGIIFYGMVRSFDNRYYRKGSAIDRLERREPFHVDEVKFVAGTTKKPLKVPITGPYTMMEWSFNDYYDSREDLAMEFARIINEELKDIASVWKQVSGGRRLEIQIDEPATTTHPDEMDIVVDSINRSVQGVDGEISMHVCYSSDYRLLYDRIPDLKIDGYNLEYSNRDTLERGLTDDKRVGFQDLKYFAQINESLQRKKFIGIGVTDVHIDYVEPVELIEDRINYALKIIGDPDLVRINPDCGLRTRSREIGEQKLRNMVMARNNILKQL.

Residues histidine 211, cysteine 213, glutamate 236, and cysteine 315 each contribute to the Zn(2+) site.

It belongs to the archaeal MetE family. It depends on Zn(2+) as a cofactor.

It participates in amino-acid biosynthesis; L-methionine biosynthesis via de novo pathway. Its function is as follows. Catalyzes the transfer of a methyl group to L-homocysteine resulting in methionine formation. The physiological methyl donor is unknown. In Thermoplasma acidophilum (strain ATCC 25905 / DSM 1728 / JCM 9062 / NBRC 15155 / AMRC-C165), this protein is Methionine synthase.